The chain runs to 41 residues: Large ribosomal subunit protein bL36 (41 aa).

The protein belongs to the bacterial ribosomal protein bL36 family.

This Parvibaculum lavamentivorans (strain DS-1 / DSM 13023 / NCIMB 13966) protein is Large ribosomal subunit protein bL36.